The following is a 204-amino-acid chain: Superoxide dismutase [Mn] (204 aa).

Mn(2+) is bound by residues His-29, His-84, Asp-167, and His-171.

Belongs to the iron/manganese superoxide dismutase family. As to quaternary structure, homotetramer. Requires Mn(2+) as cofactor.

It carries out the reaction 2 superoxide + 2 H(+) = H2O2 + O2. In terms of biological role, destroys superoxide anion radicals which are normally produced within the cells and which are toxic to biological systems. The sequence is that of Superoxide dismutase [Mn] (sodA) from Thermus aquaticus.